We begin with the raw amino-acid sequence, 119 residues long: Large ribosomal subunit protein uL14 (119 aa).

This sequence belongs to the universal ribosomal protein uL14 family. Part of the 50S ribosomal subunit. Forms a cluster with proteins L3 and L19. In the 70S ribosome, L14 and L19 interact and together make contacts with the 16S rRNA in bridges B5 and B8.

In terms of biological role, binds to 23S rRNA. Forms part of two intersubunit bridges in the 70S ribosome. The chain is Large ribosomal subunit protein uL14 from Neorickettsia sennetsu (strain ATCC VR-367 / Miyayama) (Ehrlichia sennetsu).